A 201-amino-acid chain; its full sequence is Large ribosomal subunit protein uL4 (201 aa).

Residues 46–71 (QKTRAEVVGSGKKPWRQKGTGRARAG) form a disordered region.

The protein belongs to the universal ribosomal protein uL4 family. In terms of assembly, part of the 50S ribosomal subunit.

In terms of biological role, one of the primary rRNA binding proteins, this protein initially binds near the 5'-end of the 23S rRNA. It is important during the early stages of 50S assembly. It makes multiple contacts with different domains of the 23S rRNA in the assembled 50S subunit and ribosome. Functionally, forms part of the polypeptide exit tunnel. The sequence is that of Large ribosomal subunit protein uL4 from Shewanella piezotolerans (strain WP3 / JCM 13877).